Reading from the N-terminus, the 526-residue chain is Thymocyte selection-associated high mobility group box protein TOX (526 aa).

The span at 194-203 shows a compositional bias: polar residues; it reads NMGGTNVAHN. The disordered stretch occupies residues 194–264; it reads NMGGTNVAHN…KKDPNEPQKP (71 aa). A compositionally biased stretch (low complexity) spans 209-220; the sequence is GSKSATPSPSSS. Over residues 228–245 the composition is skewed to basic and acidic residues; sequence DASKINGGEKRPASDMGK. Positions 237-256 match the Nuclear localization signal motif; it reads KRPASDMGKKPKTPKKKKKK. A compositionally biased stretch (basic residues) spans 246–256; it reads KPKTPKKKKKK. Residues 261-329 constitute a DNA-binding region (HMG box); the sequence is PQKPVSAYAL…EYLKQLAAYR (69 aa).

It belongs to the high motility group (HMG) box superfamily. Interacts with HBO1 complex composed at least of KAT7/HBO1, ING4, MEAF6, and JADE2; this complex is involved in histone acetylation. Interacts with DNMT1, LEO1, PAF1, SAP130 and SIN3A; these interactors regulate chromatin remodeling. Interacts with an array of proteins involved in RNA processing and translation and DNA replication. As to expression, expressed in neurons of the subventricular zone (at protein level). Expressed in distinct subpopulations of thymocytes undergoing positive selection: double CD4-positive CD8-positive (DP) cells, CD4-positive CD8-low transitional cells and in single CD4-positive and CD8-positive cells (at protein level). Expressed in ILC progenitors and mature ILC subsets: ILC1, ILC2 and ILC3 (at protein level). Expressed in lymphoid tissue-inducer cells and bone marrow NK cell subsets. Abundant in thymus, liver and brain. Also detected in small intestine, spleen, stomach and testis. Highly expressed in tumor-infiltrating CD8-positive T cells (at protein level).

The protein localises to the nucleus. Transcriptional regulator with a major role in neural stem cell commitment and corticogenesis as well as in lymphoid cell development and lymphoid tissue organogenesis. Binds to GC-rich DNA sequences in the proximity of transcription start sites and may alter chromatin structure, modifying access of transcription factors to DNA. During cortical development, controls the neural stem cell pool by inhibiting the switch from proliferative to differentiating progenitors. Beyond progenitor cells, promotes neurite outgrowth in newborn neurons migrating to reach the cortical plate. May activate or repress critical genes for neural stem cell fate such as SOX2, EOMES and ROBO2. Plays an essential role in the development of lymphoid tissue-inducer (LTi) cells, a subset necessary for the formation of secondary lymphoid organs: peripheral lymph nodes and Peyer's patches. Acts as a developmental checkpoint and regulates thymocyte positive selection toward T cell lineage commitment. Required for the development of various T cell subsets, including CD4-positive helper T cells, CD8-positive cytotoxic T cells, regulatory T cells and CD1D-dependent natural killer T (NKT) cells. Required for the differentiation of common lymphoid progenitors (CMP) to innate lymphoid cells (ILC). May regulate the NOTCH-mediated gene program, promoting differentiation of the ILC lineage. Required at the progenitor phase of NK cell development in the bone marrow to specify NK cell lineage commitment. Upon chronic antigen stimulation, diverts T cell development by promoting the generation of exhaustive T cells, while suppressing effector and memory T cell programming. May regulate the expression of genes encoding inhibitory receptors such as PDCD1 and induce the exhaustion program, to prevent the overstimulation of T cells and activation-induced cell death. The chain is Thymocyte selection-associated high mobility group box protein TOX from Mus musculus (Mouse).